An 86-amino-acid chain; its full sequence is Co-chaperonin GroES (86 aa).

It belongs to the GroES chaperonin family. Heptamer of 7 subunits arranged in a ring. Interacts with the chaperonin GroEL.

It is found in the cytoplasm. Functionally, together with the chaperonin GroEL, plays an essential role in assisting protein folding. The GroEL-GroES system forms a nano-cage that allows encapsulation of the non-native substrate proteins and provides a physical environment optimized to promote and accelerate protein folding. GroES binds to the apical surface of the GroEL ring, thereby capping the opening of the GroEL channel. The sequence is that of Co-chaperonin GroES from Sulfurovum sp. (strain NBC37-1).